The chain runs to 175 residues: uncharacterized protein (175 aa).

The signal sequence occupies residues 1 to 33 (MERLPYEIVSTIFRKAILHYVLIRGTTYPQSLA).

This is an uncharacterized protein from Methanocaldococcus jannaschii (strain ATCC 43067 / DSM 2661 / JAL-1 / JCM 10045 / NBRC 100440) (Methanococcus jannaschii).